The primary structure comprises 526 residues: Putative D-lactate dehydrogenase C713.03, mitochondrial (526 aa).

Positions 93 to 272 (YRGKTQLALK…TKLSVICPKR (180 aa)) constitute an FAD-binding PCMH-type domain.

Belongs to the FAD-binding oxidoreductase/transferase type 4 family. FAD serves as cofactor.

The protein localises to the mitochondrion matrix. It catalyses the reaction (R)-lactate + 2 Fe(III)-[cytochrome c] = 2 Fe(II)-[cytochrome c] + pyruvate + 2 H(+). This chain is Putative D-lactate dehydrogenase C713.03, mitochondrial, found in Schizosaccharomyces pombe (strain 972 / ATCC 24843) (Fission yeast).